The chain runs to 425 residues: Elongation factor 1-alpha (425 aa).

One can recognise a tr-type G domain in the interval 5–221 (KPHMNLAVIG…DLFKMPDMPT (217 aa)). The tract at residues 14 to 21 (GHIDHGKS) is G1. 14 to 21 (GHIDHGKS) is a binding site for GTP. Ser21 provides a ligand contact to Mg(2+). A G2 region spans residues 70-74 (GITID). The segment at 91 to 94 (DCPG) is G3. GTP contacts are provided by residues 91 to 95 (DCPGH) and 146 to 149 (NKMD). Residues 146–149 (NKMD) form a G4 region. Positions 185–187 (SAF) are G5.

The protein belongs to the TRAFAC class translation factor GTPase superfamily. Classic translation factor GTPase family. EF-Tu/EF-1A subfamily.

The protein localises to the cytoplasm. It carries out the reaction GTP + H2O = GDP + phosphate + H(+). GTP hydrolase that promotes the GTP-dependent binding of aminoacyl-tRNA to the A-site of ribosomes during protein biosynthesis. This Methanocorpusculum labreanum (strain ATCC 43576 / DSM 4855 / Z) protein is Elongation factor 1-alpha.